The chain runs to 779 residues: MGKSEGPVGMVESAGRAGQKRPGFLEGGLLLLLLLVTAALVALGVLYADRRGKQLPRLASRLCFLQEERTFVKRKPRGIPEAQEVSEVCTTPGCVIAAARILQNMDPTTEPCDDFYQFACGGWLRRHVIPETNSRYSIFDVLRDELEVILKAVLENSTAKDRPAVEKARTLYRSCMNQSVIEKRGSQPLLDILEVVGGWPVAMDRWNETVGLEWELERQLALMNSQFNRRVLIDLFIWNDDQNSSRHIIYIDQPTLGMPSREYYFNGGSNRKVREAYLQFMVSVATLLREDANLPRDSCLVQEDMVQVLELETQLAKATVPQEERHDVIALYHRMGLEELQSQFGLKGFNWTLFIQTVLSSVKIKLLPDEEVVVYGIPYLQNLENIIDTYSARTIQNYLVWRLVLDRIGSLSQRFKDTRVNYRKALFGTMVEEVRWRECVGYVNSNMENAVGSLYVREAFPGDSKSMVRELIDKVRTVFVETLDELGWMDEESKKKAQEKAMSIREQIGHPDYILEEMNRRLDEEYSNLNFSEDLYFENSLQNLKVGAQRSLRKLREKVDPNLWIIGAAVVNAFYSPNRNQIVFPAGILQPPFFSKEQPQALNFGGIGMVIGHEITHGFDDNGRNFDKNGNMMDWWSNFSTQHFREQSECMIYQYGNYSWDLADEQNVNGFNTLGENIADNGGVRQAYKAYLKWMAEGGKDQQLPGLDLTHEQLFFINYAQVWCGSYRPEFAIQSIKTDVHSPLKYRVLGSLQNLAAFADTFHCARGTPMHPKERCRVW.

At 1–27 (MGKSEGPVGMVESAGRAGQKRPGFLEG) the chain is on the cytoplasmic side. Residues 28 to 48 (GLLLLLLLVTAALVALGVLYA) form a helical; Signal-anchor for type II membrane protein membrane-spanning segment. The Lumenal portion of the chain corresponds to 49–779 (DRRGKQLPRL…MHPKERCRVW (731 aa)). One can recognise a Peptidase M13 domain in the interval 88–779 (VCTTPGCVIA…MHPKERCRVW (692 aa)). Cystine bridges form between Cys-89–Cys-94, Cys-112–Cys-764, Cys-120–Cys-724, Cys-175–Cys-439, and Cys-650–Cys-776. An a peptide-binding site is contributed by Arg-135. N-linked (GlcNAc...) asparagine glycosylation is found at Asn-177, Asn-207, Asn-350, and Asn-530. Residues 515 to 560 (LEEMNRRLDEEYSNLNFSEDLYFENSLQNLKVGAQRSLRKLREKVD) adopt a coiled-coil conformation. His-613 contributes to the Zn(2+) binding site. Glu-614 is a catalytic residue. Residue His-617 coordinates Zn(2+). Asn-657 is a glycosylation site (N-linked (GlcNAc...) asparagine). A Zn(2+)-binding site is contributed by Glu-676. Asp-680 (proton donor) is an active-site residue.

This sequence belongs to the peptidase M13 family. Zn(2+) serves as cofactor. N-glycosylated. In terms of tissue distribution, predominantly expressed in testis. Weakly expressed in brain, kidney and heart.

The protein resides in the membrane. It localises to the secreted. The catalysed reaction is Preferential cleavage of polypeptides between hydrophobic residues, particularly with Phe or Tyr at P1'.. Inhibited by thiorphan and phosphoramidon. Functionally, metalloprotease involved in sperm function, possibly by modulating the processes of fertilization and early embryonic development. Degrades a broad variety of small peptides with a preference for peptides shorter than 3 kDa containing neutral bulky aliphatic or aromatic amino acid residues. Shares the same substrate specificity with MME and cleaves peptides at the same amide bond. The protein is Membrane metallo-endopeptidase-like 1 (MMEL1) of Homo sapiens (Human).